A 947-amino-acid polypeptide reads, in one-letter code: Bifunctional glutamine synthetase adenylyltransferase/adenylyl-removing enzyme (947 aa).

Residues M1 to E440 are adenylyl removase. The interval S450–V947 is adenylyl transferase.

The protein belongs to the GlnE family. Mg(2+) is required as a cofactor.

The catalysed reaction is [glutamine synthetase]-O(4)-(5'-adenylyl)-L-tyrosine + phosphate = [glutamine synthetase]-L-tyrosine + ADP. The enzyme catalyses [glutamine synthetase]-L-tyrosine + ATP = [glutamine synthetase]-O(4)-(5'-adenylyl)-L-tyrosine + diphosphate. In terms of biological role, involved in the regulation of glutamine synthetase GlnA, a key enzyme in the process to assimilate ammonia. When cellular nitrogen levels are high, the C-terminal adenylyl transferase (AT) inactivates GlnA by covalent transfer of an adenylyl group from ATP to specific tyrosine residue of GlnA, thus reducing its activity. Conversely, when nitrogen levels are low, the N-terminal adenylyl removase (AR) activates GlnA by removing the adenylyl group by phosphorolysis, increasing its activity. The regulatory region of GlnE binds the signal transduction protein PII (GlnB) which indicates the nitrogen status of the cell. This is Bifunctional glutamine synthetase adenylyltransferase/adenylyl-removing enzyme from Salmonella paratyphi B (strain ATCC BAA-1250 / SPB7).